We begin with the raw amino-acid sequence, 464 residues long: ATP-dependent protease ATPase subunit HslU (464 aa).

ATP is bound by residues V18, 60-65 (GVGKTE), D277, E342, and R414.

This sequence belongs to the ClpX chaperone family. HslU subfamily. In terms of assembly, a double ring-shaped homohexamer of HslV is capped on each side by a ring-shaped HslU homohexamer. The assembly of the HslU/HslV complex is dependent on binding of ATP.

It is found in the cytoplasm. Functionally, ATPase subunit of a proteasome-like degradation complex; this subunit has chaperone activity. The binding of ATP and its subsequent hydrolysis by HslU are essential for unfolding of protein substrates subsequently hydrolyzed by HslV. HslU recognizes the N-terminal part of its protein substrates and unfolds these before they are guided to HslV for hydrolysis. The sequence is that of ATP-dependent protease ATPase subunit HslU from Lactobacillus delbrueckii subsp. bulgaricus (strain ATCC BAA-365 / Lb-18).